We begin with the raw amino-acid sequence, 108 residues long: UPF0235 protein MM_0822 (108 aa).

This sequence belongs to the UPF0235 family.

This Methanosarcina mazei (strain ATCC BAA-159 / DSM 3647 / Goe1 / Go1 / JCM 11833 / OCM 88) (Methanosarcina frisia) protein is UPF0235 protein MM_0822.